The following is a 338-amino-acid chain: Ferrochelatase (338 aa).

2 residues coordinate Fe cation: histidine 207 and glutamate 293.

Belongs to the ferrochelatase family.

It localises to the cytoplasm. It catalyses the reaction heme b + 2 H(+) = protoporphyrin IX + Fe(2+). It participates in porphyrin-containing compound metabolism; protoheme biosynthesis; protoheme from protoporphyrin-IX: step 1/1. In terms of biological role, catalyzes the ferrous insertion into protoporphyrin IX. The chain is Ferrochelatase from Shewanella denitrificans (strain OS217 / ATCC BAA-1090 / DSM 15013).